Reading from the N-terminus, the 638-residue chain is MATAATAAAALTGATTATPKSRRRAHHLATRRALAAPIRCSALSRATPTAPPATPLRPWGPNEPRKGSDILVEALERCGVRDVFAYPGGASMEIHQALTRSPVIANHLFRHEQGEAFAASAYARSSGRVGVCIATSGPGATNLVSALADALLDSVPMVAITGQVPRRMIGTDAFQETPIVEVTRSITKHNYLVLDVDDIPRVVQEAFFLASSGRPGPVLVDIPKDIQQQMAVPAWDTPMSLPGYIARLPKPPATEFLEQVLRLVGESRRPVLYVGGGCAASGEELCRFVELTGIPVTTTLMGLGNFPSDDPLSLRMLGMHGTVYANYAVDKADLLLAFGVRFDDRVTGKIEAFAGRAKIVHIDIDPAEIGKNKQPHVSICADVKLALQGMNTLLEGSTSKKSFDFGSWHDELDQQKREFPLGYKIFNEEIQPQYAIQVLDELTKGEAIIATGVGQHQMWAAQYYTYKRPRQWLSSAGLGAMGFGLPAAAGAAVANPGVTVVDIDGDGSFLMNIQELAMIRIENLPVKVFVLNNQHLGMVVQWEDRFYKANRAHTFLGNPENESEIYPDFVAIAKGFNIPAVRVTKKSEVHAAIKKMLEAPGPYLLDIIVPHQEHVLPMIPSGGAFKDMILDGDGRTVY.

The N-terminal 39 residues, 1-39 (MATAATAAAALTGATTATPKSRRRAHHLATRRALAAPIR), are a transit peptide targeting the chloroplast. Residues 44–67 (SRATPTAPPATPLRPWGPNEPRKG) form a disordered region. Glu-112 is a binding site for thiamine diphosphate. A disulfide bridge links Cys-132 with Cys-278. FAD-binding positions include Arg-214, 320 to 341 (HGTV…FGVR), and 363 to 382 (DIDP…ICAD). The thiamine pyrophosphate binding stretch occupies residues 455 to 535 (QHQMWAAQYY…VKVFVLNNQH (81 aa)). Positions 506 and 533 each coordinate Mg(2+).

This sequence belongs to the TPP enzyme family. Requires Mg(2+) as cofactor. Thiamine diphosphate serves as cofactor.

It is found in the plastid. The protein resides in the chloroplast. It carries out the reaction 2 pyruvate + H(+) = (2S)-2-acetolactate + CO2. The protein operates within amino-acid biosynthesis; L-isoleucine biosynthesis; L-isoleucine from 2-oxobutanoate: step 1/4. Its pathway is amino-acid biosynthesis; L-valine biosynthesis; L-valine from pyruvate: step 1/4. The sequence is that of Acetolactate synthase 2, chloroplastic (ALS2) from Zea mays (Maize).